The primary structure comprises 687 residues: MARQYPLNKFRNIGIMAHIDAGKTTSTERILFYTGKTHKIGETHEGAATMDWMVQEQERGITITSAATTCFWKDHQINIIDTPGHVDFTVEVERSLRVLDSAITILDAKGGVEPQTETVWRQADKYQVPRMIFVNKMDILGADFYMSVQTVRDRLRANAVPIQIPIGKEDDYAGHVDLIKMKAVIFDKELGVNYDEVEIPEDLKDKAEEYRSAMIEAIVETDEELMMKYLEGEEISEEEIHTALRKATIANEIVPVLCGTAYKNKGIQHLLDAVLAYLPSPLDIPSIKGVDEDGNEVERHASDDEPLGALAFKIATDPFVGKLAFVRIYSGVMHSGSYVLNSNKNKKERIGRLVKMHANHREEVEELYAGELGAVIGLKNTTTGDTLCDENAPVILESMEFPEPVISVAIEPKTKAAQEKMGIALAKLAEEDPTFKTYTDQETGQVIIAGMGELHLEIIVDRLQREFKVECNVGAPQVAYKETIKNAVKAEGKFVRQSGGRGQYGHCWIELIPHEGEYEFENAIVGGAIPREYIPAVDNGIQEAAQSGILGGYPVINFKVKCYDGSYHDVDSSEMAFKVAGSMAFKNGMAKATPVLLEPVMKVEIVVPEEYMGDVMGDVNSRRGRIEGMNPRGGAQVIAAFVPLSEMFGYATVLRSRTQGRGTYSMEFANYEEVPKSIAEKVVGENK.

The 275-residue stretch at 8–282 (NKFRNIGIMA…AVLAYLPSPL (275 aa)) folds into the tr-type G domain. Residues 17-24 (AHIDAGKT), 81-85 (DTPGH), and 135-138 (NKMD) each bind GTP.

Belongs to the TRAFAC class translation factor GTPase superfamily. Classic translation factor GTPase family. EF-G/EF-2 subfamily.

Its subcellular location is the cytoplasm. Its function is as follows. Catalyzes the GTP-dependent ribosomal translocation step during translation elongation. During this step, the ribosome changes from the pre-translocational (PRE) to the post-translocational (POST) state as the newly formed A-site-bound peptidyl-tRNA and P-site-bound deacylated tRNA move to the P and E sites, respectively. Catalyzes the coordinated movement of the two tRNA molecules, the mRNA and conformational changes in the ribosome. In Clostridium novyi (strain NT), this protein is Elongation factor G.